The sequence spans 275 residues: Elongation factor Ts (275 aa).

The segment at 76 to 79 (TDFV) is involved in Mg(2+) ion dislocation from EF-Tu.

Belongs to the EF-Ts family.

Its subcellular location is the cytoplasm. Associates with the EF-Tu.GDP complex and induces the exchange of GDP to GTP. It remains bound to the aminoacyl-tRNA.EF-Tu.GTP complex up to the GTP hydrolysis stage on the ribosome. This is Elongation factor Ts from Mycobacterium avium (strain 104).